The sequence spans 155 residues: Protein SREK1IP1 (155 aa).

Residues alanine 13–asparagine 30 form a CCHC-type zinc finger. The disordered stretch occupies residues aspartate 43–aspartate 155. Over residues glutamate 58 to lysine 74 the composition is skewed to basic and acidic residues. Residues lysine 75 to histidine 93 are compositionally biased toward basic residues. A compositionally biased stretch (basic and acidic residues) spans serine 94–lysine 103. The segment covering alanine 104–arginine 137 has biased composition (basic residues). Residues serine 140 to aspartate 155 are compositionally biased toward low complexity.

In terms of biological role, possible splicing regulator involved in the control of cellular survival. The sequence is that of Protein SREK1IP1 (srek1ip1) from Xenopus tropicalis (Western clawed frog).